The chain runs to 154 residues: Myoglobin (154 aa).

Residues 2-148 (GLSDQEWQQV…FRNDMASKYK (147 aa)) form the Globin domain. Nitrite is bound at residue His-65. Residue His-65 participates in O2 binding. His-94 contributes to the heme b binding site.

Belongs to the globin family. In terms of assembly, monomeric.

It is found in the cytoplasm. The protein resides in the sarcoplasm. The enzyme catalyses Fe(III)-heme b-[protein] + nitric oxide + H2O = Fe(II)-heme b-[protein] + nitrite + 2 H(+). The catalysed reaction is H2O2 + AH2 = A + 2 H2O. Monomeric heme protein which primary function is to store oxygen and facilitate its diffusion within muscle tissues. Reversibly binds oxygen through a pentacoordinated heme iron and enables its timely and efficient release as needed during periods of heightened demand. Depending on the oxidative conditions of tissues and cells, and in addition to its ability to bind oxygen, it also has a nitrite reductase activity whereby it regulates the production of bioactive nitric oxide. Under stress conditions, like hypoxia and anoxia, it also protects cells against reactive oxygen species thanks to its pseudoperoxidase activity. The protein is Myoglobin (MB) of Anas poecilorhyncha (Indian spot-billed duck).